Reading from the N-terminus, the 622-residue chain is Low affinity potassium transport system protein Kup (622 aa).

12 helical membrane-spanning segments follow: residues 9–29, 49–69, 103–123, 137–157, 165–185, 213–233, 247–267, 276–296, 337–357, 363–383, 396–416, and 419–439; these read LPAI…TSPL, VFGF…IKYL, VIMG…TPAI, PQLD…LFMI, VGKL…GLGL, VSFI…ALYA, WFTV…ALLL, PFFL…AALA, IYIP…IVSF, LAAA…ILST, FVAL…TANL, and LLSG…VMTT.

This sequence belongs to the HAK/KUP transporter (TC 2.A.72) family.

It localises to the cell inner membrane. It carries out the reaction K(+)(in) + H(+)(in) = K(+)(out) + H(+)(out). In terms of biological role, responsible for the low-affinity transport of potassium into the cell. Likely operates as a K(+):H(+) symporter. This Escherichia coli O157:H7 protein is Low affinity potassium transport system protein Kup.